Consider the following 297-residue polypeptide: Phosphoribosylaminoimidazole-succinocarboxamide synthase (297 aa).

Belongs to the SAICAR synthetase family.

The catalysed reaction is 5-amino-1-(5-phospho-D-ribosyl)imidazole-4-carboxylate + L-aspartate + ATP = (2S)-2-[5-amino-1-(5-phospho-beta-D-ribosyl)imidazole-4-carboxamido]succinate + ADP + phosphate + 2 H(+). The protein operates within purine metabolism; IMP biosynthesis via de novo pathway; 5-amino-1-(5-phospho-D-ribosyl)imidazole-4-carboxamide from 5-amino-1-(5-phospho-D-ribosyl)imidazole-4-carboxylate: step 1/2. This chain is Phosphoribosylaminoimidazole-succinocarboxamide synthase, found in Corynebacterium glutamicum (strain ATCC 13032 / DSM 20300 / JCM 1318 / BCRC 11384 / CCUG 27702 / LMG 3730 / NBRC 12168 / NCIMB 10025 / NRRL B-2784 / 534).